Consider the following 204-residue polypeptide: Large ribosomal subunit protein eL15y (204 aa).

Belongs to the eukaryotic ribosomal protein eL15 family.

The sequence is that of Large ribosomal subunit protein eL15y (SB62) from Picea mariana (Black spruce).